The following is a 400-amino-acid chain: Methylthioribose kinase (400 aa).

ATP contacts are provided by residues Asn44, Lys61, and 115–117; that span reads EDL. Asp233 serves as a coordination point for substrate. Residue 250-252 participates in ATP binding; it reads DPE. Arg340 contacts substrate.

Belongs to the methylthioribose kinase family. Homodimer.

It catalyses the reaction 5-(methylsulfanyl)-D-ribose + ATP = 5-(methylsulfanyl)-alpha-D-ribose 1-phosphate + ADP + H(+). It participates in amino-acid biosynthesis; L-methionine biosynthesis via salvage pathway; S-methyl-5-thio-alpha-D-ribose 1-phosphate from S-methyl-5'-thioadenosine (hydrolase route): step 2/2. Its function is as follows. Catalyzes the phosphorylation of methylthioribose into methylthioribose-1-phosphate. This Geobacillus sp. (strain WCH70) protein is Methylthioribose kinase.